The following is a 156-amino-acid chain: Small ribosomal subunit protein uS7c (156 aa).

This sequence belongs to the universal ribosomal protein uS7 family. As to quaternary structure, part of the 30S ribosomal subunit.

It localises to the plastid. Its subcellular location is the chloroplast. One of the primary rRNA binding proteins, it binds directly to 16S rRNA where it nucleates assembly of the head domain of the 30S subunit. The protein is Small ribosomal subunit protein uS7c (rps7) of Ostreococcus tauri.